Here is a 529-residue protein sequence, read N- to C-terminus: MSKIILYQEDARRALERGMDILAEAVSVTLGPKGRNVVLERKYGAPQIVNDGVTIAKEIELEDHIENTGVALIRQAASKTNDVAGDGTTTATVLAHAMVKQGMKNVAAGANAIALKRGIEKATQFIVTQIAEYARPVEDTRAISQVASISAGNDIETGKMIADAIDKVGREGVISLEEGKSTITELEMTEGMCFEKGFISPYFVTDTERMEVIQDNPYILLTDKKITLVQQELLPTLELISKTSRPLVIIAEDVEKEALATLVVNKLRGIVNVVAVRAPGFGDRRKAMLEDIAILTGGQVISEDAGFSLETLTLDMLGQARRITITKENTTIIAEGNEKDVKSRCEQIRRQIEASDSSYEREKLQERLAKLAGGVAVIKVGAATETEMKDKKLRLEDAINATKAAVEEGIVPGGGSTLTHLANDLKDWAEDNLIEDELIGALIVERSLTSPLRRIIENTGQNSAIIIEQIKESEFNIGYDAAKGEIVDMYDVGIIDPAKVTRSGLQNAASIASMILTTECIVVDKQDEK.

Residues 29–32 (TLGP), 86–90 (DGTTT), glycine 414, 480–482 (DAA), and aspartate 496 contribute to the ATP site.

This sequence belongs to the chaperonin (HSP60) family. Forms a cylinder of 14 subunits composed of two heptameric rings stacked back-to-back. Interacts with the co-chaperonin GroES.

The protein localises to the plastid. It is found in the chloroplast. It catalyses the reaction ATP + H2O + a folded polypeptide = ADP + phosphate + an unfolded polypeptide.. Its function is as follows. Together with its co-chaperonin GroES, plays an essential role in assisting protein folding. The GroEL-GroES system forms a nano-cage that allows encapsulation of the non-native substrate proteins and provides a physical environment optimized to promote and accelerate protein folding. The protein is Chaperonin GroEL, chloroplastic of Guillardia theta (Cryptophyte).